Consider the following 444-residue polypeptide: uncharacterized protein (444 aa).

The region spanning Met-1–Lys-69 is the HTH gntR-type domain. The H-T-H motif DNA-binding region spans Ile-29 to Gln-48. At Lys-286 the chain carries N6-(pyridoxal phosphate)lysine.

The protein in the C-terminal section; belongs to the class-I pyridoxal-phosphate-dependent aminotransferase family. It depends on pyridoxal 5'-phosphate as a cofactor.

This is an uncharacterized protein from Bacillus subtilis (strain 168).